A 93-amino-acid polypeptide reads, in one-letter code: Acylphosphatase (93 aa).

Residues 6 to 93 (RAIVTVKGLV…GEFDTFDVRY (88 aa)) form the Acylphosphatase-like domain. Catalysis depends on residues Arg21 and Asn39.

The protein belongs to the acylphosphatase family.

It catalyses the reaction an acyl phosphate + H2O = a carboxylate + phosphate + H(+). The sequence is that of Acylphosphatase (acyP) from Geobacter metallireducens (strain ATCC 53774 / DSM 7210 / GS-15).